A 244-amino-acid polypeptide reads, in one-letter code: MIKKLKGRQRIQLIACNNINYVYKTEFHLGESAWKWNPTLKSFIYKEISQIHIIRIPAFLLIIGKVLNLIREVMRFRGKVVIVANNLANGKVIERLVKTMRQPALLTKYYAGGLTRKTENLRQYLEADKGLTNLKVRSKYIKQLIGLQDLERKPAYIVILDAIQGKFLINESAILGIPTIGCGDTTINFPKLNYPLIGNFKSREKRGSVLLLIKHAMFEGMRQEATIFAEYYNKYTRMYKSFLK.

The protein belongs to the universal ribosomal protein uS2 family.

It localises to the mitochondrion. The sequence is that of Small ribosomal subunit protein uS2m (mrps2) from Dictyostelium discoideum (Social amoeba).